The sequence spans 508 residues: Protein DETOXIFICATION 52 (508 aa).

The next 12 membrane-spanning stretches (helical) occupy residues 48–68 (ILAA…LGHI), 78–98 (LAIA…ALGM), 122–142 (VLFL…LGKI), 156–176 (AQTY…LHPL), 189–209 (LTLA…FLVS), 222–242 (AAAS…IAGL), 270–290 (IGVC…GLLI), 300–320 (GILI…GLAV), 341–361 (IVAV…AWGV), 368–388 (IFTN…ILGL), 415–437 (INLG…WAAY), and 441–463 (GLWV…VVAT).

The protein belongs to the multi antimicrobial extrusion (MATE) (TC 2.A.66.1) family. Detected in the part of the veins in cotyledons of 6-day-old seedlings and the basal parts of the petioles in older plants. Highly expressed in the vascular tissues of hypocotyl in dark-grown seedlings.

It localises to the late endosome membrane. In terms of biological role, may act as a negative regulator of hypocotyl cell elongation in the light. This chain is Protein DETOXIFICATION 52, found in Arabidopsis thaliana (Mouse-ear cress).